The following is a 339-amino-acid chain: Ketol-acid reductoisomerase (NADP(+)) (339 aa).

Residues 1 to 182 enclose the KARI N-terminal Rossmann domain; sequence MRVYYDRDAD…GGGRSGIIET (182 aa). NADP(+) is bound by residues 24 to 27, Arg-48, Ser-51, Ser-53, and 83 to 86; these read YGSQ and DELQ. His-108 is an active-site residue. Gly-134 contributes to the NADP(+) binding site. One can recognise a KARI C-terminal knotted domain in the interval 183–328; that stretch reads TFREECETDL…EKLRGMMPWI (146 aa). The Mg(2+) site is built by Asp-191, Glu-195, Glu-227, and Glu-231. A substrate-binding site is contributed by Ser-252.

The protein belongs to the ketol-acid reductoisomerase family. The cofactor is Mg(2+).

The enzyme catalyses (2R)-2,3-dihydroxy-3-methylbutanoate + NADP(+) = (2S)-2-acetolactate + NADPH + H(+). It catalyses the reaction (2R,3R)-2,3-dihydroxy-3-methylpentanoate + NADP(+) = (S)-2-ethyl-2-hydroxy-3-oxobutanoate + NADPH + H(+). It functions in the pathway amino-acid biosynthesis; L-isoleucine biosynthesis; L-isoleucine from 2-oxobutanoate: step 2/4. The protein operates within amino-acid biosynthesis; L-valine biosynthesis; L-valine from pyruvate: step 2/4. Functionally, involved in the biosynthesis of branched-chain amino acids (BCAA). Catalyzes an alkyl-migration followed by a ketol-acid reduction of (S)-2-acetolactate (S2AL) to yield (R)-2,3-dihydroxy-isovalerate. In the isomerase reaction, S2AL is rearranged via a Mg-dependent methyl migration to produce 3-hydroxy-3-methyl-2-ketobutyrate (HMKB). In the reductase reaction, this 2-ketoacid undergoes a metal-dependent reduction by NADPH to yield (R)-2,3-dihydroxy-isovalerate. The chain is Ketol-acid reductoisomerase (NADP(+)) from Magnetospirillum molischianum (Rhodospirillum molischianum).